We begin with the raw amino-acid sequence, 200 residues long: 3-isopropylmalate dehydratase small subunit 2 (200 aa).

The protein belongs to the LeuD family. LeuD type 1 subfamily. Heterodimer of LeuC and LeuD.

It catalyses the reaction (2R,3S)-3-isopropylmalate = (2S)-2-isopropylmalate. Its pathway is amino-acid biosynthesis; L-leucine biosynthesis; L-leucine from 3-methyl-2-oxobutanoate: step 2/4. Functionally, catalyzes the isomerization between 2-isopropylmalate and 3-isopropylmalate, via the formation of 2-isopropylmaleate. The polypeptide is 3-isopropylmalate dehydratase small subunit 2 (Mannheimia succiniciproducens (strain KCTC 0769BP / MBEL55E)).